A 304-amino-acid chain; its full sequence is Porphobilinogen deaminase (304 aa).

Cys-240 carries the post-translational modification S-(dipyrrolylmethanemethyl)cysteine.

It belongs to the HMBS family. Monomer. Dipyrromethane is required as a cofactor.

The catalysed reaction is 4 porphobilinogen + H2O = hydroxymethylbilane + 4 NH4(+). The protein operates within porphyrin-containing compound metabolism; protoporphyrin-IX biosynthesis; coproporphyrinogen-III from 5-aminolevulinate: step 2/4. Its function is as follows. Tetrapolymerization of the monopyrrole PBG into the hydroxymethylbilane pre-uroporphyrinogen in several discrete steps. This Xanthomonas oryzae pv. oryzae (strain MAFF 311018) protein is Porphobilinogen deaminase.